The sequence spans 78 residues: MASNRELIEMEGVVVESLPNAMFQVELENGFQVLAHISGKIRRNSIKILLGDRVTVELTPYDLTKGRIIYRLRKDRTQ.

Residues 1–73 (MASNRELIEM…TKGRIIYRLR (73 aa)) enclose the S1-like domain.

It belongs to the IF-1 family. As to quaternary structure, component of the 30S ribosomal translation pre-initiation complex which assembles on the 30S ribosome in the order IF-2 and IF-3, IF-1 and N-formylmethionyl-tRNA(fMet); mRNA recruitment can occur at any time during PIC assembly.

The protein localises to the plastid. It is found in the chloroplast. Functionally, one of the essential components for the initiation of protein synthesis. Stabilizes the binding of IF-2 and IF-3 on the 30S subunit to which N-formylmethionyl-tRNA(fMet) subsequently binds. Helps modulate mRNA selection, yielding the 30S pre-initiation complex (PIC). Upon addition of the 50S ribosomal subunit IF-1, IF-2 and IF-3 are released leaving the mature 70S translation initiation complex. This chain is Translation initiation factor IF-1, chloroplastic, found in Ostreococcus tauri.